The following is a 433-amino-acid chain: Phosphomethylpyrimidine synthase 2 (433 aa).

Substrate-binding positions include asparagine 66, methionine 94, tyrosine 123, histidine 162, 184 to 186 (SRG), 225 to 228 (DALR), and glutamate 264. Zn(2+) is bound at residue histidine 268. Tyrosine 291 lines the substrate pocket. Residue histidine 332 participates in Zn(2+) binding. [4Fe-4S] cluster is bound by residues cysteine 408, cysteine 411, and cysteine 415.

The protein belongs to the ThiC family. [4Fe-4S] cluster serves as cofactor.

The enzyme catalyses 5-amino-1-(5-phospho-beta-D-ribosyl)imidazole + S-adenosyl-L-methionine = 4-amino-2-methyl-5-(phosphooxymethyl)pyrimidine + CO + 5'-deoxyadenosine + formate + L-methionine + 3 H(+). Its pathway is cofactor biosynthesis; thiamine diphosphate biosynthesis. Functionally, catalyzes the synthesis of the hydroxymethylpyrimidine phosphate (HMP-P) moiety of thiamine from aminoimidazole ribotide (AIR) in a radical S-adenosyl-L-methionine (SAM)-dependent reaction. This is Phosphomethylpyrimidine synthase 2 from Saccharolobus solfataricus (strain ATCC 35092 / DSM 1617 / JCM 11322 / P2) (Sulfolobus solfataricus).